We begin with the raw amino-acid sequence, 288 residues long: ATP synthase gamma chain (288 aa).

It belongs to the ATPase gamma chain family. In terms of assembly, F-type ATPases have 2 components, CF(1) - the catalytic core - and CF(0) - the membrane proton channel. CF(1) has five subunits: alpha(3), beta(3), gamma(1), delta(1), epsilon(1). CF(0) has three main subunits: a, b and c.

Its subcellular location is the cell inner membrane. In terms of biological role, produces ATP from ADP in the presence of a proton gradient across the membrane. The gamma chain is believed to be important in regulating ATPase activity and the flow of protons through the CF(0) complex. This is ATP synthase gamma chain from Laribacter hongkongensis (strain HLHK9).